The chain runs to 116 residues: UPF0134 protein MPN_038 (116 aa).

Belongs to the UPF0134 family.

This chain is UPF0134 protein MPN_038, found in Mycoplasma pneumoniae (strain ATCC 29342 / M129 / Subtype 1) (Mycoplasmoides pneumoniae).